A 393-amino-acid chain; its full sequence is Acetylornithine aminotransferase (393 aa).

Pyridoxal 5'-phosphate-binding positions include 102-103 (GA) and F136. R139 contacts N(2)-acetyl-L-ornithine. 219-222 (DEVQ) contributes to the pyridoxal 5'-phosphate binding site. At K248 the chain carries N6-(pyridoxal phosphate)lysine. Residue S274 participates in N(2)-acetyl-L-ornithine binding. Position 275 (T275) interacts with pyridoxal 5'-phosphate.

It belongs to the class-III pyridoxal-phosphate-dependent aminotransferase family. ArgD subfamily. Homodimer. The cofactor is pyridoxal 5'-phosphate.

The protein localises to the cytoplasm. The enzyme catalyses N(2)-acetyl-L-ornithine + 2-oxoglutarate = N-acetyl-L-glutamate 5-semialdehyde + L-glutamate. The protein operates within amino-acid biosynthesis; L-arginine biosynthesis; N(2)-acetyl-L-ornithine from L-glutamate: step 4/4. This is Acetylornithine aminotransferase from Wolinella succinogenes (strain ATCC 29543 / DSM 1740 / CCUG 13145 / JCM 31913 / LMG 7466 / NCTC 11488 / FDC 602W) (Vibrio succinogenes).